A 339-amino-acid polypeptide reads, in one-letter code: Glycerol-3-phosphate dehydrogenase [NAD(P)+] (339 aa).

Positions 11, 12, and 109 each coordinate NADPH. Lys-109, Gly-140, and Ser-142 together coordinate sn-glycerol 3-phosphate. NADPH is bound at residue Ala-144. Sn-glycerol 3-phosphate contacts are provided by Lys-195, Asp-249, Ser-259, Arg-260, and Asn-261. Lys-195 serves as the catalytic Proton acceptor. Arg-260 contributes to the NADPH binding site. NADPH contacts are provided by Val-284 and Glu-286.

Belongs to the NAD-dependent glycerol-3-phosphate dehydrogenase family.

It localises to the cytoplasm. It catalyses the reaction sn-glycerol 3-phosphate + NAD(+) = dihydroxyacetone phosphate + NADH + H(+). The enzyme catalyses sn-glycerol 3-phosphate + NADP(+) = dihydroxyacetone phosphate + NADPH + H(+). Its pathway is membrane lipid metabolism; glycerophospholipid metabolism. Functionally, catalyzes the reduction of the glycolytic intermediate dihydroxyacetone phosphate (DHAP) to sn-glycerol 3-phosphate (G3P), the key precursor for phospholipid synthesis. The protein is Glycerol-3-phosphate dehydrogenase [NAD(P)+] of Lactobacillus helveticus (strain DPC 4571).